Here is a 299-residue protein sequence, read N- to C-terminus: tRNA dimethylallyltransferase (299 aa).

Residue 13 to 20 (GPTASGKT) participates in ATP binding. 15-20 (TASGKT) serves as a coordination point for substrate. The interaction with substrate tRNA stretch occupies residues 38–41 (DSRQ).

The protein belongs to the IPP transferase family. As to quaternary structure, monomer. Requires Mg(2+) as cofactor.

The enzyme catalyses adenosine(37) in tRNA + dimethylallyl diphosphate = N(6)-dimethylallyladenosine(37) in tRNA + diphosphate. Its function is as follows. Catalyzes the transfer of a dimethylallyl group onto the adenine at position 37 in tRNAs that read codons beginning with uridine, leading to the formation of N6-(dimethylallyl)adenosine (i(6)A). In Prochlorococcus marinus (strain MIT 9515), this protein is tRNA dimethylallyltransferase.